A 302-amino-acid polypeptide reads, in one-letter code: F-box protein SKIP19 (302 aa).

In terms of domain architecture, F-box spans 16-63 (STNWTELPPELTSAILHRLGAIEILENAQKVCRSWRRVCKDPSMWRKI).

In terms of assembly, part of a SCF (ASK-cullin-F-box) protein ligase complex. Interacts with CUL1 and SPK1B/ASK2.

The protein localises to the nucleus. It functions in the pathway protein modification; protein ubiquitination. Component of SCF(ASK-cullin-F-box) E3 ubiquitin ligase complexes, which may mediate the ubiquitination and subsequent proteasomal degradation of target proteins. The polypeptide is F-box protein SKIP19 (SKIP19) (Arabidopsis thaliana (Mouse-ear cress)).